Reading from the N-terminus, the 329-residue chain is Diaminopimelate epimerase (329 aa).

Positions 14 and 73 each coordinate substrate. The active-site Proton donor is the Cys-82. Residues 83-84 (GN), Asn-170, Asn-206, and 224-225 (ER) each bind substrate. Cys-233 functions as the Proton acceptor in the catalytic mechanism. Residue 234–235 (GT) coordinates substrate.

The protein belongs to the diaminopimelate epimerase family. Homodimer.

Its subcellular location is the cytoplasm. The catalysed reaction is (2S,6S)-2,6-diaminopimelate = meso-2,6-diaminopimelate. The protein operates within amino-acid biosynthesis; L-lysine biosynthesis via DAP pathway; DL-2,6-diaminopimelate from LL-2,6-diaminopimelate: step 1/1. Catalyzes the stereoinversion of LL-2,6-diaminopimelate (L,L-DAP) to meso-diaminopimelate (meso-DAP), a precursor of L-lysine and an essential component of the bacterial peptidoglycan. The sequence is that of Diaminopimelate epimerase from Listeria monocytogenes serotype 4b (strain F2365).